The following is a 223-amino-acid chain: Sigma non-opioid intracellular receptor 1 (223 aa).

Over 1-9 (MQWALGRRW) the chain is Lumenal. Residues 2–8 (QWALGRR) form a targeting to endoplasmic reticulum-associated lipid droplets region. A helical membrane pass occupies residues 10–30 (VWAALLLAAAAVLTQVVWLWL). Topologically, residues 31 to 223 (GTQSFVFQHE…FTTYLFGQDS (193 aa)) are cytoplasmic. Residues 99–106 (SLSEYVLL) form an important for ligand-binding region. The tract at residues 177-223 (VIPSTLAFALADTIFSTQDFLTLFYTLRAYARGLRLEFTTYLFGQDS) is C-terminal hydrophobic region.

This sequence belongs to the ERG2 family. Homotrimer. Forms a ternary complex with ANK2 and ITPR3. The complex is disrupted by agonists. Interacts with KCNA4. Interacts with KCNA2; cocaine consumption leads to increased interaction. Interacts with RNF112 in an oxidative stress-regulated manner.

Its subcellular location is the nucleus inner membrane. It is found in the nucleus outer membrane. It localises to the nucleus envelope. The protein localises to the cytoplasmic vesicle. The protein resides in the endoplasmic reticulum membrane. Its subcellular location is the membrane. It is found in the lipid droplet. It localises to the cell junction. The protein localises to the cell membrane. The protein resides in the cell projection. Its subcellular location is the growth cone. It is found in the postsynaptic density membrane. Functionally, functions in lipid transport from the endoplasmic reticulum and is involved in a wide array of cellular functions probably through regulation of the biogenesis of lipid microdomains at the plasma membrane. Involved in the regulation of different receptors it plays a role in BDNF signaling and EGF signaling. Also regulates ion channels like the potassium channel and could modulate neurotransmitter release. Plays a role in calcium signaling through modulation together with ANK2 of the ITP3R-dependent calcium efflux at the endoplasmic reticulum. Plays a role in several other cell functions including proliferation, survival and death. Originally identified for its ability to bind various psychoactive drugs it is involved in learning processes, memory and mood alteration. Necessary for proper mitochondrial axonal transport in motor neurons, in particular the retrograde movement of mitochondria. Plays a role in protecting cells against oxidative stress-induced cell death via its interaction with RNF112. The protein is Sigma non-opioid intracellular receptor 1 (SIGMAR1) of Mustela erminea (Ermine).